The sequence spans 232 residues: MTQEILEDVNPTRMELLKLQDRIELAKKGHKLLKEKRDALIMEFFEMVKRASEIREQAVKKLMEAYSKLAAAKVTVGEIGVERASMATGEEIKVDVGSRNVMGVVVPIIERVSEDGGSKVVYGFADTSGALDEAMRAFTEAIDAVLELAEIEETLRLMAEEIERTKRRVNALEHIVIPRLENTEKYIEMKLDEQERENFVRLKRVKDLIERKKLKEELERVVEEGAELPSFE.

It belongs to the V-ATPase D subunit family. As to quaternary structure, has multiple subunits with at least A(3), B(3), C, D, E, F, H, I and proteolipid K(x).

It localises to the cell membrane. Component of the A-type ATP synthase that produces ATP from ADP in the presence of a proton gradient across the membrane. The chain is A-type ATP synthase subunit D from Methanopyrus kandleri (strain AV19 / DSM 6324 / JCM 9639 / NBRC 100938).